Here is a 285-residue protein sequence, read N- to C-terminus: Probable endonuclease 4 (285 aa).

The Zn(2+) site is built by His-69, His-109, Glu-145, Asp-179, His-182, His-216, Asp-229, His-231, and Glu-261.

It belongs to the AP endonuclease 2 family. The cofactor is Zn(2+).

It catalyses the reaction Endonucleolytic cleavage to 5'-phosphooligonucleotide end-products.. In terms of biological role, endonuclease IV plays a role in DNA repair. It cleaves phosphodiester bonds at apurinic or apyrimidinic (AP) sites, generating a 3'-hydroxyl group and a 5'-terminal sugar phosphate. The sequence is that of Probable endonuclease 4 from Shigella flexneri serotype 5b (strain 8401).